Reading from the N-terminus, the 839-residue chain is Autophagy-related protein 9A (839 aa).

The residue at position 2 (A2) is an N-acetylalanine. Residues 2 to 61 (AQFDTEYQRLEASYSDSPPGEEDLLVHVAEGSKSPWHHIENLDLFFSRVYNLHQKNGFTC) are Cytoplasmic-facing. The short motif at 8 to 11 (YQRL) is the Tyrosine-based sorting signal element. Residues S14, S16, and S18 each carry the phosphoserine modification. Residues 62–84 (MLIGEIFELMQFLFVVAFTTFLV) traverse the membrane as a helical segment. Residues 85 to 128 (SCVDYDILFANKMVNHSLHPTEPVKVTLPDAFLPAQVCSARIQE) are Lumenal-facing. N99 carries N-linked (GlcNAc...) asparagine glycosylation. A helical transmembrane segment spans residues 129-154 (NGSLITILVIAGVFWIHRLIKFIYNI). Over 155–290 (CCYWEIHSFY…ELAQRLSNRI (136 aa)) the chain is Cytoplasmic. The stretch at 291-301 (LWIGIANFLLC) is an intramembrane region. The Cytoplasmic segment spans residues 302–319 (PLILIWQILYAFFSYAEV). Residues 320 to 328 (LKREPGALG) lie within the membrane without spanning it. At 329–371 (ARCWSLYGRCYLRHFNELEHELQSRLNRGYKPASKYMNCFLSP) the chain is on the cytoplasmic side. Residues 372–397 (LLTLLAKNGAFFAGSILAVLIALTIY) traverse the membrane as a helical segment. Residues 398-406 (DEDVLAVEH) are Lumenal-facing. Residues 407–424 (VLTTVTLLGVTVTVCRSF) traverse the membrane as a helical segment. Over 425 to 470 (IPDQHMVFCPEQLLRVILAHIHYMPDHWQGNAHRSQTRDEFAQLFQ) the chain is Cytoplasmic. Residues 471 to 480 (YKAVFILEEL) lie within the membrane without spanning it. The Cytoplasmic segment spans residues 481–483 (LSP). An intramembrane segment occupies 484 to 492 (IVTPLILIF). Over 493-839 (CLRPRALEII…DELPPQVHKV (347 aa)) the chain is Cytoplasmic. A phosphoserine mark is found at S656, S735, S738, S741, and S828. Disordered regions lie at residues 656-689 (SPLQ…SSVW) and 717-839 (HKQQ…VHKV). The segment covering 724 to 736 (EPERHVWHRRESD) has biased composition (basic and acidic residues). Composition is skewed to acidic residues over residues 737 to 747 (ESGESAPEEGG) and 823 to 832 (VPEEGSEDEL).

The protein belongs to the ATG9 family. As to quaternary structure, homotrimer; forms a homotrimer with a central pore that forms a path between the two membrane leaflets. Interacts (via cytoplasmic its C-terminus) with ATG2A. Interacts with SUPT20H. Interacts (via the tyrosine-based sorting signal motif) with AP4M1; promoting association with the AP-4 complex. Interacts with ARFIP1 and ARFIP2. Interacts with PI4K2A and PI4KB. Interacts with ATG4A; the interaction is direct and promotes ATG9A trafficking. Post-translationally, ufmylated in a DDRGK1 dependent manner.

It is found in the preautophagosomal structure membrane. Its subcellular location is the cytoplasmic vesicle. The protein resides in the autophagosome membrane. The protein localises to the golgi apparatus. It localises to the trans-Golgi network membrane. It is found in the late endosome membrane. Its subcellular location is the recycling endosome membrane. The protein resides in the endoplasmic reticulum membrane. The protein localises to the mitochondrion membrane. The catalysed reaction is a 1,2-diacyl-sn-glycero-3-phosphocholine(in) = a 1,2-diacyl-sn-glycero-3-phosphocholine(out). It catalyses the reaction a 1,2-diacyl-sn-glycero-3-phospho-L-serine(in) = a 1,2-diacyl-sn-glycero-3-phospho-L-serine(out). The enzyme catalyses a 1,2-diacyl-sn-glycero-3-phosphoethanolamine(in) = a 1,2-diacyl-sn-glycero-3-phosphoethanolamine(out). In terms of biological role, phospholipid scramblase involved in autophagy by mediating autophagosomal membrane expansion. Cycles between the preautophagosomal structure/phagophore assembly site (PAS) and the cytoplasmic vesicle pool and supplies membrane for the growing autophagosome. Lipid scramblase activity plays a key role in preautophagosomal structure/phagophore assembly by distributing the phospholipids that arrive through ATG2 (ATG2A or ATG2B) from the cytoplasmic to the luminal leaflet of the bilayer, thereby driving autophagosomal membrane expansion. Also required to supply phosphatidylinositol 4-phosphate to the autophagosome initiation site by recruiting the phosphatidylinositol 4-kinase beta (PI4KB) in a process dependent on ARFIP2, but not ARFIP1. In addition to autophagy, also plays a role in necrotic cell death. This Rattus norvegicus (Rat) protein is Autophagy-related protein 9A.